A 428-amino-acid polypeptide reads, in one-letter code: Serine--tRNA ligase (428 aa).

An L-serine-binding site is contributed by threonine 231–glutamate 233. Arginine 262–glutamate 264 is a binding site for ATP. Glutamate 285 provides a ligand contact to L-serine. Glutamate 349–serine 352 contacts ATP. Serine 385 is a binding site for L-serine.

It belongs to the class-II aminoacyl-tRNA synthetase family. Type-1 seryl-tRNA synthetase subfamily. In terms of assembly, homodimer. The tRNA molecule binds across the dimer.

The protein localises to the cytoplasm. The enzyme catalyses tRNA(Ser) + L-serine + ATP = L-seryl-tRNA(Ser) + AMP + diphosphate + H(+). It catalyses the reaction tRNA(Sec) + L-serine + ATP = L-seryl-tRNA(Sec) + AMP + diphosphate + H(+). The protein operates within aminoacyl-tRNA biosynthesis; selenocysteinyl-tRNA(Sec) biosynthesis; L-seryl-tRNA(Sec) from L-serine and tRNA(Sec): step 1/1. Functionally, catalyzes the attachment of serine to tRNA(Ser). Is also able to aminoacylate tRNA(Sec) with serine, to form the misacylated tRNA L-seryl-tRNA(Sec), which will be further converted into selenocysteinyl-tRNA(Sec). The chain is Serine--tRNA ligase from Staphylococcus aureus (strain USA300).